Reading from the N-terminus, the 111-residue chain is DNA-directed RNA polymerase subunit Rpo11 (111 aa).

This sequence belongs to the archaeal Rpo11/eukaryotic RPB11/RPC19 RNA polymerase subunit family. In terms of assembly, part of the RNA polymerase complex.

Its subcellular location is the cytoplasm. The enzyme catalyses RNA(n) + a ribonucleoside 5'-triphosphate = RNA(n+1) + diphosphate. Functionally, DNA-dependent RNA polymerase (RNAP) catalyzes the transcription of DNA into RNA using the four ribonucleoside triphosphates as substrates. The sequence is that of DNA-directed RNA polymerase subunit Rpo11 from Thermoplasma acidophilum (strain ATCC 25905 / DSM 1728 / JCM 9062 / NBRC 15155 / AMRC-C165).